A 245-amino-acid chain; its full sequence is Ribosomal RNA large subunit methyltransferase E (245 aa).

The interval 1–26 (MTKPPVGSNRSGRKLGQKVKKGKLKA) is disordered. Residues 11 to 26 (SGRKLGQKVKKGKLKA) show a composition bias toward basic residues. The S-adenosyl-L-methionine site is built by Gly81, Trp83, Asp104, Asp120, and Asp144. Residue Lys184 is the Proton acceptor of the active site.

This sequence belongs to the class I-like SAM-binding methyltransferase superfamily. RNA methyltransferase RlmE family.

It is found in the cytoplasm. It catalyses the reaction uridine(2552) in 23S rRNA + S-adenosyl-L-methionine = 2'-O-methyluridine(2552) in 23S rRNA + S-adenosyl-L-homocysteine + H(+). Its function is as follows. Specifically methylates the uridine in position 2552 of 23S rRNA at the 2'-O position of the ribose in the fully assembled 50S ribosomal subunit. This chain is Ribosomal RNA large subunit methyltransferase E, found in Sinorhizobium medicae (strain WSM419) (Ensifer medicae).